The sequence spans 306 residues: Low-density lipoprotein receptor class A domain-containing protein 4 (306 aa).

Over 1–64 the chain is Lumenal; sequence MPEAGFQATN…PPGIFNSELE (64 aa). In terms of domain architecture, LDL-receptor class A spans 11–48; that stretch reads AFTECKFTCTSGKCLYLGSLVCNQQNDCGDNSDEENCL. Cystine bridges form between C19–C38 and C32–C47. The chain crosses the membrane as a helical span at residues 65–85; that stretch reads FAQILIIVVVVTVMVVVVVCL. Topologically, residues 86–306 are cytoplasmic; it reads LNHYKVSTRS…GKDRKPGDLV (221 aa). A disordered region spans residues 100 to 127; the sequence is PNQSQRQEDGLQPEGSLWPSDSSVQRPG. The PPxY motif 1 signature appears at 180-183; that stretch reads PPPY. An SMAD interaction motif (SIM) motif is present at residues 208 to 211; the sequence is PPNR. The short motif at 252–255 is the PPxY motif 2 element; sequence PPTY. The segment at 268 to 306 is disordered; that stretch reads FHHQHSNTHRGSRPQFQPNNSEGTIVPIKGKDRKPGDLV. Basic residues predominate over residues 269–279; sequence HHQHSNTHRGS. Over residues 281–290 the composition is skewed to polar residues; that stretch reads PQFQPNNSEG. Residues 296–306 are compositionally biased toward basic and acidic residues; the sequence is KGKDRKPGDLV.

Belongs to the PMEPA1 family. Interacts with PMEPA1. Interacts (via the SMAD interaction motif) with SMAD2 and SMAD3. Detected in all tissues tested.

The protein resides in the early endosome membrane. Functions as a negative regulator of TGF-beta signaling and thereby probably plays a role in cell proliferation, differentiation, apoptosis, motility, extracellular matrix production and immunosuppression. In the canonical TGF-beta pathway, ZFYVE9/SARA recruits the intracellular signal transducer and transcriptional modulators SMAD2 and SMAD3 to the TGF-beta receptor. Phosphorylated by the receptor, SMAD2 and SMAD3 then form a heteromeric complex with SMAD4 that translocates to the nucleus to regulate transcription. Through interaction with SMAD2 and SMAD3, LDLRAD4 may compete with ZFYVE9 and SMAD4 and prevent propagation of the intracellular signal. The sequence is that of Low-density lipoprotein receptor class A domain-containing protein 4 (Ldlrad4) from Mus musculus (Mouse).